The chain runs to 273 residues: ATP synthase F(1) complex subunit gamma, mitochondrial (273 aa).

Lysine 14 bears the N6-acetyllysine mark. Residue lysine 24 is modified to N6-succinyllysine. Lysine 30 carries the N6-acetyllysine modification. Lysine 90 is subject to N6-acetyllysine; alternate. Lysine 90 bears the N6-succinyllysine; alternate mark. An N6-acetyllysine modification is found at lysine 113. Position 121 is a phosphoserine (serine 121). Residue lysine 129 is modified to N6-acetyllysine; alternate. At lysine 129 the chain carries N6-succinyllysine; alternate. N6-acetyllysine is present on lysine 172. The residue at position 245 (lysine 245) is an N6-succinyllysine.

It belongs to the ATPase gamma chain family. As to quaternary structure, component of the ATP synthase complex composed at least of ATP5F1A/subunit alpha, ATP5F1B/subunit beta, ATP5MC1/subunit c (homooctomer), MT-ATP6/subunit a, MT-ATP8/subunit 8, ATP5ME/subunit e, ATP5MF/subunit f, ATP5MG/subunit g, ATP5MK/subunit k, ATP5MJ/subunit j, ATP5F1C/subunit gamma, ATP5F1D/subunit delta, ATP5F1E/subunit epsilon, ATP5PF/subunit F6, ATP5PB/subunit b, ATP5PD/subunit d, ATP5PO/subunit OSCP. ATP synthase complex consists of a soluble F(1) head domain (subunits alpha(3) and beta(3)) - the catalytic core - and a membrane F(0) domain - the membrane proton channel (subunits c, a, 8, e, f, g, k and j). These two domains are linked by a central stalk (subunits gamma, delta, and epsilon) rotating inside the F1 region and a stationary peripheral stalk (subunits F6, b, d, and OSCP). Interacts with FLVCR2; this interaction occurs in the absence of heme and is disrupted upon heme binding.

It localises to the mitochondrion inner membrane. Its function is as follows. Subunit gamma, of the mitochondrial membrane ATP synthase complex (F(1)F(0) ATP synthase or Complex V) that produces ATP from ADP in the presence of a proton gradient across the membrane which is generated by electron transport complexes of the respiratory chain. ATP synthase complex consist of a soluble F(1) head domain - the catalytic core - and a membrane F(1) domain - the membrane proton channel. These two domains are linked by a central stalk rotating inside the F(1) region and a stationary peripheral stalk. During catalysis, ATP synthesis in the catalytic domain of F(1) is coupled via a rotary mechanism of the central stalk subunits to proton translocation. In vivo, can only synthesize ATP although its ATP hydrolase activity can be activated artificially in vitro. With the central stalk subunit delta, is essential for the biogenesis of F(1) catalytic part of the ATP synthase complex namely in the formation of F1 assembly intermediate. The chain is ATP synthase F(1) complex subunit gamma, mitochondrial from Rattus norvegicus (Rat).